The sequence spans 39 residues: U1-ectatotoxin-Et1b subunit A (39 aa).

A disulfide bridge links cysteine 14 with cysteine 35.

Belongs to the ectatomin family. Ectatomin-Et subfamily. In terms of assembly, heterodimer of subunits A and B; disulfide-linked. As to expression, expressed by the venom gland.

It is found in the secreted. It localises to the target cell membrane. The protein is U1-ectatotoxin-Et1b subunit A of Ectatomma tuberculatum (Selva ant).